Consider the following 261-residue polypeptide: Insulin-like growth factor-binding protein-related protein 1 (261 aa).

The first 17 residues, 1 to 17 (MWIPLLLVALVVPAIRC), serve as a signal peptide directing secretion. The 84-residue stretch at 18-101 (ERKCGECNPE…DPPEAMCVCL (84 aa)) folds into the IGFBP N-terminal domain. Disulfide bonds link Cys21–Cys45, Cys24–Cys47, Cys29–Cys48, Cys36–Cys51, Cys59–Cys82, Cys76–Cys98, Cys100–Cys118, and Cys107–Cys139. Residues 70–141 (NRGHGPCGEY…RAMHRGPCKS (72 aa)) form the Kazal-like domain. Residues 143-243 (PKITSPPEEA…GESSAAARVV (101 aa)) form the Ig-like C2-type domain. The N-linked (GlcNAc...) asparagine glycan is linked to Asn154. Cysteines 164 and 227 form a disulfide.

Expressed by the venom gland.

Its subcellular location is the secreted. This is Insulin-like growth factor-binding protein-related protein 1 from Cupiennius salei (American wandering spider).